Consider the following 438-residue polypeptide: MKPLRYTASALALGLALMANAQAVTTIPFWHSMEGELGKEVDSLAQRFNAENPDYKIVPTYKGNYEQNLSAGIAAFRTGNAPAILQVYEVGTATMMASKAIKPVYDVFKEAGIQFDESQFVPTVSGYYSDSKTGHLLSQPFNSSTPVLYYNKDAFKKAGLDPKQPPKTWQDLADYAAKLKASGMKCGYASGWQGWIQLENFSAWNGLPFASKNNGFDGTDAVLEFNKPEQVKHIAMLEEMNKKGDFSYVGRKDESTEKFYNGDCAMTTASSGSLANIREYAKFNYGVGMMPYDADAKDAPQNAIIGGASLWVMQGKDKETYTGVAKFLDFLAKPENAAEWHQKTGYLPITKAAYDLTREQGFYEKNPGADIATRQMLNKPPLPFTKGLRLGNMPQIRVIVDEELESVWTGKKTPQQALDTAVERGNQLLRRFEKSTKS.

Positions 1 to 23 (MKPLRYTASALALGLALMANAQA) are cleaved as a signal peptide. The sn-glycerol 3-phosphate site is built by Tyr65, Glu89, Ser144, Ser270, Gly307, Tyr346, and Arg397.

This sequence belongs to the bacterial solute-binding protein 1 family. The complex is composed of two ATP-binding proteins (UgpC), two transmembrane proteins (UgpA and UgpE) and a solute-binding protein (UgpB).

It localises to the periplasm. Functionally, part of the ABC transporter complex UgpBAEC involved in sn-glycerol-3-phosphate (G3P) import. Binds G3P. In Escherichia coli O1:K1 / APEC, this protein is sn-glycerol-3-phosphate-binding periplasmic protein UgpB (ugpB).